The following is a 489-amino-acid chain: Glutamyl-tRNA(Gln) amidotransferase subunit A (489 aa).

Catalysis depends on charge relay system residues K80 and S160. S184 acts as the Acyl-ester intermediate in catalysis.

It belongs to the amidase family. GatA subfamily. As to quaternary structure, heterotrimer of A, B and C subunits.

The catalysed reaction is L-glutamyl-tRNA(Gln) + L-glutamine + ATP + H2O = L-glutaminyl-tRNA(Gln) + L-glutamate + ADP + phosphate + H(+). Allows the formation of correctly charged Gln-tRNA(Gln) through the transamidation of misacylated Glu-tRNA(Gln) in organisms which lack glutaminyl-tRNA synthetase. The reaction takes place in the presence of glutamine and ATP through an activated gamma-phospho-Glu-tRNA(Gln). The polypeptide is Glutamyl-tRNA(Gln) amidotransferase subunit A (Wolbachia pipientis wMel).